A 496-amino-acid chain; its full sequence is MAGEITETGELYSSYVGLVYMFNLIVGTGALTMPKAFATAGWLVSLVLLVFLGFMSFVTTTFVIEAMAAANAQLRWKRMENLKEEEDDDSSTASDSDVLIRDNYERAEKRPILSVQRRGSPNPFEITDRVEMGQMASMFFNKVGVNLFYFCIIVYLYGDLAIYAAAVPFSLMQVTCSATGNDSCGVEADTKYNDTDRCWGPLRRVDAYRIYLAIFTLLLGPFTFFDVQKTKYLQILTSLMRWIAFAVMIVLALVRIGHRQGEGHPPLADFSGVRNLFGVCVYSFMCQHSLPSLITPVSSKRHLTRLVFLDYVLILAFYGLLSFTAIFCFRGDSLMDMYTLNFARCDIVGLAAVRFFLGLFPVFTISTNFPIIAVTLRNNWKTLFHREGGTYPWVVDRVVFPTITLVPPVLVAFCTHDLESLVGITGAYAGTGIQYVIPAFLVYHCRRDTQLAFGCGVGNKHRSPFRHTFWVGFVLLWAFSCFIFVTANIVLSETKL.

The Cytoplasmic segment spans residues 1–10; the sequence is MAGEITETGE. Residues 11–31 form a helical membrane-spanning segment; sequence LYSSYVGLVYMFNLIVGTGAL. The Extracellular portion of the chain corresponds to 32-36; the sequence is TMPKA. A helical transmembrane segment spans residues 37-57; the sequence is FATAGWLVSLVLLVFLGFMSF. Residues 58-146 are Cytoplasmic-facing; the sequence is VTTTFVIEAM…SMFFNKVGVN (89 aa). Residues 147-167 form a helical membrane-spanning segment; sequence LFYFCIIVYLYGDLAIYAAAV. Residues 168–204 are Extracellular-facing; the sequence is PFSLMQVTCSATGNDSCGVEADTKYNDTDRCWGPLRR. An N-linked (GlcNAc...) asparagine glycan is attached at Asn-193. A helical membrane pass occupies residues 205-225; that stretch reads VDAYRIYLAIFTLLLGPFTFF. At 226–233 the chain is on the cytoplasmic side; the sequence is DVQKTKYL. A helical transmembrane segment spans residues 234–254; the sequence is QILTSLMRWIAFAVMIVLALV. Residues 255-276 lie on the Extracellular side of the membrane; sequence RIGHRQGEGHPPLADFSGVRNL. Residues 277 to 297 traverse the membrane as a helical segment; it reads FGVCVYSFMCQHSLPSLITPV. Residues 298–306 lie on the Cytoplasmic side of the membrane; sequence SSKRHLTRL. Residues 307–327 form a helical membrane-spanning segment; that stretch reads VFLDYVLILAFYGLLSFTAIF. At 328 to 354 the chain is on the extracellular side; that stretch reads CFRGDSLMDMYTLNFARCDIVGLAAVR. Residues 355–375 traverse the membrane as a helical segment; that stretch reads FFLGLFPVFTISTNFPIIAVT. Over 376–397 the chain is Cytoplasmic; sequence LRNNWKTLFHREGGTYPWVVDR. Residues 398 to 418 traverse the membrane as a helical segment; it reads VVFPTITLVPPVLVAFCTHDL. Residues 419 to 421 lie on the Extracellular side of the membrane; it reads ESL. The chain crosses the membrane as a helical span at residues 422–442; that stretch reads VGITGAYAGTGIQYVIPAFLV. The Cytoplasmic portion of the chain corresponds to 443 to 470; that stretch reads YHCRRDTQLAFGCGVGNKHRSPFRHTFW. Residues 471 to 491 form a helical membrane-spanning segment; that stretch reads VGFVLLWAFSCFIFVTANIVL. At 492–496 the chain is on the extracellular side; it reads SETKL.

This sequence belongs to the TMEM104 family.

The protein resides in the membrane. The chain is Transmembrane protein 104 (TMEM104) from Pongo abelii (Sumatran orangutan).